A 144-amino-acid chain; its full sequence is UPF0102 protein BTH_I3148 (144 aa).

The tract at residues 1–20 (MCHARAARQATGEAEAAPRD) is disordered.

The protein belongs to the UPF0102 family.

This chain is UPF0102 protein BTH_I3148, found in Burkholderia thailandensis (strain ATCC 700388 / DSM 13276 / CCUG 48851 / CIP 106301 / E264).